The primary structure comprises 453 residues: Argininosuccinate lyase (453 aa).

This sequence belongs to the lyase 1 family. Argininosuccinate lyase subfamily.

It localises to the cytoplasm. It carries out the reaction 2-(N(omega)-L-arginino)succinate = fumarate + L-arginine. Its pathway is amino-acid biosynthesis; L-arginine biosynthesis; L-arginine from L-ornithine and carbamoyl phosphate: step 3/3. This is Argininosuccinate lyase from Shewanella loihica (strain ATCC BAA-1088 / PV-4).